The chain runs to 222 residues: Large ribosomal subunit protein uL1 (222 aa).

The protein belongs to the universal ribosomal protein uL1 family. In terms of assembly, part of the 50S ribosomal subunit.

Its function is as follows. Binds directly to 23S rRNA. Probably involved in E site tRNA release. Functionally, protein L1 is also a translational repressor protein, it controls the translation of its operon by binding to its mRNA. This Pyrobaculum calidifontis (strain DSM 21063 / JCM 11548 / VA1) protein is Large ribosomal subunit protein uL1.